A 34-amino-acid polypeptide reads, in one-letter code: MSDIN-like toxin proprotein 7 (34 aa).

A propeptide spanning residues 1 to 10 (MSDINATRLP) is cleaved from the precursor. The cyclopeptide (Ala-Pro) cross-link spans 11 to 17 (AWLTDCP). Positions 18–34 (CVGDDVNRLLTRGESLC) are excised as a propeptide.

The protein belongs to the MSDIN fungal toxin family. In terms of processing, processed by the macrocyclase-peptidase enzyme POPB to yield a toxic cyclic heptapeptide. POPB first removes 10 residues from the N-terminus. Conformational trapping of the remaining peptide forces the enzyme to release this intermediate rather than proceed to macrocyclization. The enzyme rebinds the remaining peptide in a different conformation and catalyzes macrocyclization of the N-terminal 7 residues. In terms of tissue distribution, expressed in basidiocarps.

Probable toxin that belongs to the MSDIN-like toxin family responsible for a large number of food poisoning cases and deaths. This is MSDIN-like toxin proprotein 7 from Amanita exitialis (Guangzhou destroying angel).